The sequence spans 360 residues: 3-dehydroquinate synthase (360 aa).

NAD(+) contacts are provided by residues Asp-70–Lys-75, Thr-128–Thr-129, Lys-141, and Lys-150. Zn(2+)-binding residues include Glu-182, His-243, and His-259.

This sequence belongs to the sugar phosphate cyclases superfamily. Dehydroquinate synthase family. NAD(+) is required as a cofactor. Requires Co(2+) as cofactor. It depends on Zn(2+) as a cofactor.

The protein localises to the cytoplasm. The enzyme catalyses 7-phospho-2-dehydro-3-deoxy-D-arabino-heptonate = 3-dehydroquinate + phosphate. The protein operates within metabolic intermediate biosynthesis; chorismate biosynthesis; chorismate from D-erythrose 4-phosphate and phosphoenolpyruvate: step 2/7. Catalyzes the conversion of 3-deoxy-D-arabino-heptulosonate 7-phosphate (DAHP) to dehydroquinate (DHQ). This chain is 3-dehydroquinate synthase, found in Thermoplasma volcanium (strain ATCC 51530 / DSM 4299 / JCM 9571 / NBRC 15438 / GSS1).